Here is a 982-residue protein sequence, read N- to C-terminus: Collagen alpha-1(I) chain (982 aa).

The segment at 1 to 982 (GPMGPSGPRG…PGAPGPPGPP (982 aa)) is disordered. Residues 8–27 (PRGFQGPPGEPGEPGASGPM) show a composition bias toward low complexity. Basic and acidic residues predominate over residues 39–53 (NGDDGEAGKPGRPGE). Phosphoserine is present on Ser-81. Low complexity-rich tracts occupy residues 89 to 105 (DAGPAGPKGEPGSPGEN) and 128 to 141 (PAGARGNDGATGAA). The segment covering 143-155 (PPGPTGPAGPPGF) has biased composition (pro residues). Positions 189 to 228 (AGAAGPAGNPGADGQPGAKGANGAPGIAGAPGFPGARGPS) are enriched in low complexity. A compositionally biased stretch (gly residues) spans 294 to 303 (GERGGPGSRG). 9 stretches are compositionally biased toward low complexity: residues 304 to 335 (FPGADGVAGPKGPAGERGAPGPAGPKGSPGEA), 347 to 373 (KGITGSPGSPGPDGKTGPPGPAGQDGR), 382 to 401 (ARGQAGVMGFPGPKGAAGEP), 425 to 437 (AGAQGPPGSAGPA), 513 to 526 (APGAPGSQGAPGIQ), 583 to 597 (SGPSGPAGPTGARGA), 610 to 640 (AGFAGPPGADGQPGAKGEPGDAGAKGDAGPA), 666 to 682 (SAGPPGATGFPGAAGRV), and 727 to 751 (AGEKGSPGSDGPAGAPGTPGPQGIA). The residue at position 586 (Ser-586) is a Phosphoserine. 2 stretches are compositionally biased toward pro residues: residues 792–802 (PPGPIGPPGIA) and 838–853 (AGPPGAPGAPGAPGPV). Low complexity predominate over residues 874-888 (IGPTGARGPAGPQGP). Residues 889–900 (RGDKGETGEQGD) show a composition bias toward basic and acidic residues. A compositionally biased stretch (low complexity) spans 916–940 (PGEQGPAGASGPAGPRGPPGSAGAP). Residues 966–982 (PRGPPGPPGAPGPPGPP) show a composition bias toward pro residues.

It belongs to the fibrillar collagen family. In terms of assembly, trimers of one alpha 2(I) and two alpha 1(I) chains. Post-translationally, prolines at the third position of the tripeptide repeating unit (G-X-Y) are hydroxylated in some or all of the chains. Forms the fibrils of tendon, ligaments and bones. In bones, the fibrils are mineralized with calcium hydroxyapatite.

It is found in the secreted. The protein localises to the extracellular space. The protein resides in the extracellular matrix. Type I collagen is a member of group I collagen (fibrillar forming collagen). The sequence is that of Collagen alpha-1(I) chain from Toxodon sp.